Reading from the N-terminus, the 514-residue chain is Transmembrane protein 117 (514 aa).

Residues 1–15 lie on the Cytoplasmic side of the membrane; sequence MGKDFRYYFQHPWSR. Residues 16-36 form a helical membrane-spanning segment; it reads MIVAYLVIFFNFLIFAEDPVS. The Extracellular portion of the chain corresponds to 37–65; the sequence is HSQTEANVIVVGNCFSFVTNKYPRGVGWR. Residues 66–86 form a helical membrane-spanning segment; the sequence is ILKVLLWLLAILIGLIAGKFL. The Cytoplasmic portion of the chain corresponds to 87–110; it reads FHQRLFGQLLRLKMFREDHGSWMT. A helical membrane pass occupies residues 111–131; that stretch reads MFFSTILFLFIFSHIYNTILL. The Extracellular portion of the chain corresponds to 132 to 154; it reads MDGNMGAYLITDYMGIRNESFMK. The chain crosses the membrane as a helical span at residues 155 to 175; that stretch reads LAAVGTWMGDFVTAWMVTDMM. Topologically, residues 176–198 are cytoplasmic; that stretch reads LQDKPYPDWGKSARAFWKKGNVR. Residues 199 to 219 form a helical membrane-spanning segment; that stretch reads IILFWTVLFTLTSVVVLVITT. Residues 220 to 239 lie on the Extracellular side of the membrane; that stretch reads DWISWDKLNRGFLPSDEVSR. A helical membrane pass occupies residues 240 to 260; it reads AFLASFILVFDLLIVMQDWEF. At 261–295 the chain is on the cytoplasmic side; that stretch reads PHFMGDVDVNLPGLHTPHMQFKIPFFQKIFKEEYR. The helical transmembrane segment at 296–316 threads the bilayer; it reads IHITGKWFNYGIIFLVLILDL. The Extracellular segment spans residues 317–394; that stretch reads NMWKNQIFYK…FIGASLDVKC (78 aa). 2 N-linked (GlcNAc...) asparagine glycosylation sites follow: Asn-353 and Asn-371. The chain crosses the membrane as a helical span at residues 395-415; the sequence is LAFVPSLIAFVWFGFFIWFFG. Residues 416–514 are Cytoplasmic-facing; that stretch reads RFLKNEQGME…PAASQRMRTN (99 aa). The tract at residues 430–450 is disordered; it reads TYTRMKRKSPSEHSKDMGITR. Basic and acidic residues predominate over residues 438–448; that stretch reads SPSEHSKDMGI. Thr-453 is modified (phosphothreonine). The segment at 494–514 is disordered; sequence ESTSEVEAEQEPAASQRMRTN.

Belongs to the TMEM117 family.

It is found in the cell membrane. Its function is as follows. Involved in endoplasmic reticulum (ER) stress-induced cell death pathway. In Mus musculus (Mouse), this protein is Transmembrane protein 117 (Tmem117).